We begin with the raw amino-acid sequence, 233 residues long: UPF0502 protein YpsIP31758_2048 (233 aa).

It belongs to the UPF0502 family.

The chain is UPF0502 protein YpsIP31758_2048 from Yersinia pseudotuberculosis serotype O:1b (strain IP 31758).